The chain runs to 76 residues: Tautomerase PptA (76 aa).

Residue Pro2 is the Proton acceptor; via imino nitrogen of the active site.

The protein belongs to the 4-oxalocrotonate tautomerase family. PptA subfamily. Homodimer.

It localises to the cytoplasm. In Pectobacterium atrosepticum (strain SCRI 1043 / ATCC BAA-672) (Erwinia carotovora subsp. atroseptica), this protein is Tautomerase PptA.